The chain runs to 428 residues: Putative aminotransferase MSMEG_6286/MSMEI_6121 (428 aa).

Gly37 lines the substrate pocket. Residues Tyr72, 102-105 (ASLE), Asn191, 222-225 (AYAV), and 256-258 (STS) contribute to the pyridoxal 5'-phosphate site. Lys339 is covalently cross-linked (Isoglutamyl lysine isopeptide (Lys-Gln) (interchain with Q-Cter in protein Pup)).

It belongs to the class-I pyridoxal-phosphate-dependent aminotransferase family. It depends on pyridoxal 5'-phosphate as a cofactor.

The sequence is that of Putative aminotransferase MSMEG_6286/MSMEI_6121 from Mycolicibacterium smegmatis (strain ATCC 700084 / mc(2)155) (Mycobacterium smegmatis).